Reading from the N-terminus, the 541-residue chain is CRISPR-associated exonuclease Cas4/endonuclease Cas1 fusion (541 aa).

A CRISPR-associated exonuclease Cas4 region spans residues 1 to 179; that stretch reads MGIHSLLYCE…NCSLAPVCLP (179 aa). C9 contacts [4Fe-4S] cluster. Residues D65 and E78 each contribute to the Mn(2+) site. The [4Fe-4S] cluster site is built by C168, C171, and C177. A CRISPR-associated endonuclease Cas1 region spans residues 204–541; it reads TLHVFGHDSR…ANIFAQARLR (338 aa). Mn(2+) contacts are provided by E365, H433, and E448.

It in the N-terminal section; belongs to the CRISPR-associated exonuclease Cas4 family. The protein in the C-terminal section; belongs to the CRISPR-associated endonuclease Cas1 family. In terms of assembly, homodimer, forms a heterotetramer with a Cas2 homodimer. Requires [4Fe-4S] cluster as cofactor. Mg(2+) serves as cofactor. Mn(2+) is required as a cofactor.

The enzyme catalyses exonucleolytic cleavage in the 5'- to 3'-direction to yield nucleoside 3'-phosphates.. CRISPR (clustered regularly interspaced short palindromic repeat), is an adaptive immune system that provides protection against mobile genetic elements (viruses, transposable elements and conjugative plasmids). CRISPR clusters contain spacers, sequences complementary to antecedent mobile elements, and target invading nucleic acids. CRISPR clusters are transcribed and processed into CRISPR RNA (crRNA). The Cas4 region acts as a ssDNA exonuclease, while the Cas1 region acts as a dsDNA endonuclease. Involved in the integration of spacer DNA into the CRISPR cassette. In Leptospira interrogans serogroup Icterohaemorrhagiae serovar Lai (strain 56601), this protein is CRISPR-associated exonuclease Cas4/endonuclease Cas1 fusion (cas4-cas1).